The following is a 145-amino-acid chain: Large ribosomal subunit protein uL13 (145 aa).

This sequence belongs to the universal ribosomal protein uL13 family. As to quaternary structure, part of the 50S ribosomal subunit.

This protein is one of the early assembly proteins of the 50S ribosomal subunit, although it is not seen to bind rRNA by itself. It is important during the early stages of 50S assembly. The polypeptide is Large ribosomal subunit protein uL13 (Bacillus licheniformis (strain ATCC 14580 / DSM 13 / JCM 2505 / CCUG 7422 / NBRC 12200 / NCIMB 9375 / NCTC 10341 / NRRL NRS-1264 / Gibson 46)).